Here is a 591-residue protein sequence, read N- to C-terminus: Chaperone protein DnaK (591 aa).

The residue at position 175 (Thr-175) is a Phosphothreonine; by autocatalysis. The segment covering 568–577 (AQAAEFANKQ) has biased composition (low complexity). Positions 568–591 (AQAAEFANKQNESDPNNNSSEQNN) are disordered. The span at 580–591 (SDPNNNSSEQNN) shows a compositional bias: polar residues.

Belongs to the heat shock protein 70 family.

Functionally, acts as a chaperone. The sequence is that of Chaperone protein DnaK from Mycoplasma mycoides subsp. mycoides SC (strain CCUG 32753 / NCTC 10114 / PG1).